Reading from the N-terminus, the 102-residue chain is Co-chaperonin GroES (102 aa).

It belongs to the GroES chaperonin family. In terms of assembly, heptamer of 7 subunits arranged in a ring. Interacts with the chaperonin GroEL.

The protein resides in the cytoplasm. Functionally, together with the chaperonin GroEL, plays an essential role in assisting protein folding. The GroEL-GroES system forms a nano-cage that allows encapsulation of the non-native substrate proteins and provides a physical environment optimized to promote and accelerate protein folding. GroES binds to the apical surface of the GroEL ring, thereby capping the opening of the GroEL channel. The polypeptide is Co-chaperonin GroES (Chlamydia caviae (strain ATCC VR-813 / DSM 19441 / 03DC25 / GPIC) (Chlamydophila caviae)).